The primary structure comprises 48 residues: Large ribosomal subunit protein bL33 (48 aa).

This sequence belongs to the bacterial ribosomal protein bL33 family.

The sequence is that of Large ribosomal subunit protein bL33 from Streptococcus mutans serotype c (strain ATCC 700610 / UA159).